The following is a 350-amino-acid chain: Putative zinc metalloprotease jhp_0242 (350 aa).

His-16 contributes to the Zn(2+) binding site. Residue Glu-17 is part of the active site. His-20 contributes to the Zn(2+) binding site. 5 helical membrane passes run 43–63 (WFFK…GGYV), 94–114 (LWIL…VYFF), 249–269 (LIMG…VGAL), 277–297 (MLLL…LLPI), and 326–346 (LWLV…FNDI). The 70-residue stretch at 108–177 (AVLVYFFLAL…GELILEIERN (70 aa)) folds into the PDZ domain.

The protein belongs to the peptidase M50B family. It depends on Zn(2+) as a cofactor.

It localises to the cell inner membrane. This Helicobacter pylori (strain J99 / ATCC 700824) (Campylobacter pylori J99) protein is Putative zinc metalloprotease jhp_0242.